The primary structure comprises 146 residues: Angiogenin (146 aa).

Positions 1 to 24 (MVMGLGLFLLVFMLGLGLTSPTLA) are cleaved as a signal peptide. Glutamine 25 is modified (pyrrolidone carboxylic acid). Histidine 37 (proton acceptor) is an active-site residue. Arginine 45 provides a ligand contact to tRNA. Cystine bridges form between cysteine 50–cysteine 105, cysteine 63–cysteine 116, and cysteine 81–cysteine 131. The Nucleolar localization signal signature appears at 55–59 (RRQGM). 2 residues coordinate tRNA: cysteine 105 and isoleucine 127. The active-site Proton donor is the histidine 138.

This sequence belongs to the pancreatic ribonuclease family. Homodimer. Interacts with RNH1; inhibiting ANG ribonuclease activity. Interacts with PCNA.

It localises to the secreted. Its subcellular location is the nucleus. The protein resides in the nucleolus. It is found in the cytoplasm. The protein localises to the stress granule. Its activity is regulated as follows. Has weak tRNA ribonuclease activity by itself due to partial autoinhibition by its C-terminus, which folds into a short alpha-helix that partially occludes the substrate-binding site. In absence of stress, the ribonuclease activity is inhibited by RNH1 in the cytoplasm. In response to stress, dissociates from RNH1 in the cytoplasm and associates with cytoplasmic ribosomes with vacant A-sites: ribosomes directly activate the tRNA ribonuclease activity of ANG by refolding the C-terminal alpha-helix. In response to stress, the angiogenic activity of ANG is inhibited by RNH1 in the nucleus. Functionally, secreted ribonuclease that can either promote or restrict cell proliferation of target cells, depending on the context. Endocytosed in target cells via its receptor PLXNB2 and translocates to the cytoplasm or nucleus. Under stress conditions, localizes to the cytoplasm and promotes the assembly of stress granules (SGs): specifically cleaves a subset of tRNAs within anticodon loops to produce tRNA-derived stress-induced fragments (tiRNAs), resulting in translation repression and inhibition of cell proliferation. tiRNas also prevent formation of apoptosome, thereby promoting cell survival. Preferentially cleaves RNAs between a pyrimidine and an adenosine residue, suggesting that it cleaves the anticodon loop of tRNA(Ala) (32-UUAGCAU-38) after positions 33 and 36. Cleaves a subset of tRNAs, including tRNA(Ala), tRNA(Glu), tRNA(Gly), tRNA(Lys), tRNA(Val), tRNA(His), tRNA(Asp) and tRNA(Sec). Under growth conditions and in differentiated cells, translocates to the nucleus and stimulates ribosomal RNA (rRNA) transcription, including that containing the initiation site sequences of 45S rRNA, thereby promoting cell growth and proliferation. Angiogenin induces vascularization of normal and malignant tissues via its ability to promote rRNA transcription. Involved in hematopoietic stem and progenitor cell (HSPC) growth and survival by promoting rRNA transcription in growth conditions and inhibiting translation in response to stress, respectively. Mediates the crosstalk between myeloid and intestinal epithelial cells to protect the intestinal epithelial barrier integrity: secreted by myeloid cells and promotes intestinal epithelial cells proliferation and survival. Also mediates osteoclast-endothelial cell crosstalk in growing bone: produced by osteoclasts and protects the neighboring vascular cells against senescence by promoting rRNA transcription. The protein is Angiogenin (ANG) of Miopithecus talapoin (Angolan talapoin).